We begin with the raw amino-acid sequence, 343 residues long: tRNA N6-adenosine threonylcarbamoyltransferase (343 aa).

2 residues coordinate Fe cation: histidine 115 and histidine 119. Residues leucine 137–glycine 141, aspartate 170, glycine 183, aspartate 187, and asparagine 276 contribute to the substrate site. Aspartate 306 contributes to the Fe cation binding site.

The protein belongs to the KAE1 / TsaD family. It depends on Fe(2+) as a cofactor.

It localises to the cytoplasm. It carries out the reaction L-threonylcarbamoyladenylate + adenosine(37) in tRNA = N(6)-L-threonylcarbamoyladenosine(37) in tRNA + AMP + H(+). Required for the formation of a threonylcarbamoyl group on adenosine at position 37 (t(6)A37) in tRNAs that read codons beginning with adenine. Is involved in the transfer of the threonylcarbamoyl moiety of threonylcarbamoyl-AMP (TC-AMP) to the N6 group of A37, together with TsaE and TsaB. TsaD likely plays a direct catalytic role in this reaction. This is tRNA N6-adenosine threonylcarbamoyltransferase from Limosilactobacillus reuteri (strain DSM 20016) (Lactobacillus reuteri).